The following is a 28-amino-acid chain: Short cationic peptide-1a (28 aa).

Glutamic acid 1-amide is present on E28.

In terms of tissue distribution, expressed by the venom gland.

It localises to the secreted. In Cupiennius salei (American wandering spider), this protein is Short cationic peptide-1a.